A 117-amino-acid chain; its full sequence is Large ribosomal subunit protein bL20 (117 aa).

Belongs to the bacterial ribosomal protein bL20 family.

Its function is as follows. Binds directly to 23S ribosomal RNA and is necessary for the in vitro assembly process of the 50S ribosomal subunit. It is not involved in the protein synthesizing functions of that subunit. The protein is Large ribosomal subunit protein bL20 of Vibrio cholerae serotype O1 (strain ATCC 39541 / Classical Ogawa 395 / O395).